A 317-amino-acid chain; its full sequence is MIMRFGYVSHAMALWDCSPAKTMTFTSFQKLSKQEREDKLYDVTRQNLEHTIRILHYNIAHEIPLYRLSSSIVPLATHPEVEFDYIGLFTPLWRTIGALIKEHNLRVSFHPNQFTLFTSDKPHITTNAITDMTYHYKVLDAIGIADSSYINIHVGGAYGNKEKAVERFHDNIKKLPAHIKRRMTLENDDKTYTTAETLSICQKEKIPFVFDYHHHMANLCEEPLEELLPAIFETWSHTNIVPKVHISSPKSKKEFRAHAEYIDLEFIKPFLHVAKKINHNFDIMIESKQKDLAMLQFIHELSSIRGVKRISSSTLQW.

Belongs to the uve1/UvsE family.

Its function is as follows. Component in a DNA repair pathway. Removal of UV LIGHT damaged nucleotides. Recognizes pyrimidine dimers and cleave a phosphodiester bond immediately 5' to the lesion. This chain is UV DNA damage endonuclease, found in Bacillus cereus (strain Q1).